Reading from the N-terminus, the 157-residue chain is MKVELCSFSGYKIYPGHGRRYARVDGKVFQFLNAKCESAFLSKRNPRQINWTVLYRRKHKKGQSEEVSKKRTRRAVKFQRAITGASLAEILAKRNQKPEVRKAQREQAIRAAKEAKKAKQATKKQTTQSSKAPAKSAQKQKIAKPMKVSAPRVGGKR.

Residues 95–157 are disordered; that stretch reads NQKPEVRKAQ…VSAPRVGGKR (63 aa). Basic and acidic residues predominate over residues 96–117; it reads QKPEVRKAQREQAIRAAKEAKK. Residues 123–145 show a composition bias toward low complexity; that stretch reads KKQTTQSSKAPAKSAQKQKIAKP.

This sequence belongs to the eukaryotic ribosomal protein eL24 family. As to quaternary structure, component of the large ribosomal subunit.

It is found in the cytoplasm. Component of the large ribosomal subunit. The ribosome is a large ribonucleoprotein complex responsible for the synthesis of proteins in the cell. Plays an essential role in early embryonic development. This is Large ribosomal subunit protein eL24 (rpl24) from Danio rerio (Zebrafish).